Here is a 469-residue protein sequence, read N- to C-terminus: Alpha-galactosidase (469 aa).

Residues 1–17 (MFPFFFALFFSSTDVLA) form the signal peptide. Cys-41 and Cys-73 are oxidised to a cystine. Asp-71 and Asp-72 together coordinate substrate. A glycan (N-linked (GlcNAc...) asparagine) is linked at Asn-81. The cysteines at positions 120 and 150 are disulfide-linked. Lys-146 is a binding site for substrate. The active-site Nucleophile is the Asp-148. The N-linked (GlcNAc...) asparagine glycan is linked to Asn-174. Arg-204 lines the substrate pocket. Asp-208 acts as the Proton donor in catalysis. 2 cysteine pairs are disulfide-bonded: Cys-220–Cys-236 and Cys-222–Cys-229. Gln-250 contacts substrate. N-linked (GlcNAc...) asparagine glycosylation is found at Asn-269, Asn-369, Asn-402, Asn-412, Asn-421, Asn-426, and Asn-434.

It belongs to the glycosyl hydrolase 27 family. In terms of assembly, homotetramer.

The protein localises to the secreted. It carries out the reaction Hydrolysis of terminal, non-reducing alpha-D-galactose residues in alpha-D-galactosides, including galactose oligosaccharides, galactomannans and galactolipids.. This is Alpha-galactosidase (MEL) from Lachancea cidri (Yeast).